A 265-amino-acid polypeptide reads, in one-letter code: Aquaporin-5 (265 aa).

Residues 1-12 (MKKEVCSLAFLK) are Cytoplasmic-facing. The helical transmembrane segment at 13–33 (AVFAEFLATLIFVFFGLASAL) threads the bilayer. Residues 34–39 (KWPSAL) lie on the Extracellular side of the membrane. The helical transmembrane segment at 40–60 (PTILQIALAFGLAIGTLAQAL) threads the bilayer. Residues 61-65 (GPVSG) are Cytoplasmic-facing. The segment at residues 66–74 (GHINPAITL) is an intramembrane region (discontinuously helical). The NPA 1 motif lies at 69–71 (NPA). Residues 75 to 87 (ALLVGNQISLLRA) are Cytoplasmic-facing. The helical transmembrane segment at 88-108 (VFYVVAQLVGAIAGAGILYGL) threads the bilayer. The Extracellular segment spans residues 109–126 (APGNARGNLAVNSLNNNT). N124 carries N-linked (GlcNAc...) asparagine glycosylation. A helical membrane pass occupies residues 127-147 (TPGQAVVVEMILTFQLALCIF). Residues 148 to 158 (SSTDSRRTSPV) are Cytoplasmic-facing. The helical transmembrane segment at 159–179 (GSPALSIGLSVTLGHLVGIYF) threads the bilayer. Position 180 (T180) is a topological domain, extracellular. Positions 181 to 191 (GCSMNPARSFG) form an intramembrane region, discontinuously helical. Residues 185–187 (NPA) carry the NPA 2 motif. The Extracellular portion of the chain corresponds to 192-203 (PAVVMNRFSPSH). Residues 204–224 (WVFWVGPIVGAAVAAILYFYL) traverse the membrane as a helical segment. The Cytoplasmic portion of the chain corresponds to 225–265 (LFPNSLSLSERVAVVKGTYESEEDWEEQREERKKTMELTAH).

The protein belongs to the MIP/aquaporin (TC 1.A.8) family. As to quaternary structure, homotetramer; each monomer provides an independent water pore. Interacts with TRPV4; the interaction is probably indirect and regulates TRPV4 activation by hypotonicity.

It localises to the apical cell membrane. The protein localises to the cell membrane. Its subcellular location is the cytoplasmic vesicle membrane. It catalyses the reaction H2O(in) = H2O(out). Functionally, aquaporins form homotetrameric transmembrane channels, with each monomer independently mediating water transport across the plasma membrane along its osmotic gradient. Plays an important role in fluid secretion in salivary glands. Required for TRPV4 activation by hypotonicity. Together with TRPV4, controls regulatory volume decrease in salivary epithelial cells. Seems to play a redundant role in water transport in the eye, lung and in sweat glands. The protein is Aquaporin-5 of Sus scrofa (Pig).